The sequence spans 1486 residues: Chromosome partition protein MukB (1486 aa).

34-41 (GGNGAGKS) is an ATP binding site. Coiled coils occupy residues 326–418 (LEAD…QYNQ), 444–480 (LETF…QAYQ), and 509–603 (RHLA…RAPV). Residues 666–783 (PGGSEDQRLN…EVPLFGRAAR (118 aa)) are flexible hinge. Coiled coils occupy residues 835–923 (EAEI…AKLE), 977–1115 (EMLS…TAKA), and 1209–1266 (VEAI…QNVS).

Belongs to the SMC family. MukB subfamily. Homodimerization via its hinge domain. Binds to DNA via its C-terminal region. Interacts, and probably forms a ternary complex, with MukE and MukF via its C-terminal region. The complex formation is stimulated by calcium or magnesium. Interacts with tubulin-related protein FtsZ.

Its subcellular location is the cytoplasm. The protein localises to the nucleoid. Its function is as follows. Plays a central role in chromosome condensation, segregation and cell cycle progression. Functions as a homodimer, which is essential for chromosome partition. Involved in negative DNA supercoiling in vivo, and by this means organize and compact chromosomes. May achieve or facilitate chromosome segregation by condensation DNA from both sides of a centrally located replisome during cell division. In Escherichia coli O81 (strain ED1a), this protein is Chromosome partition protein MukB.